We begin with the raw amino-acid sequence, 458 residues long: MARGPQTLVQVWVGGQLFQADRALLVEHCGFFRGLFRSGMRETRAAEVRLGVLSAGGFRATLQVLRGDRPALAAEDELLQAVECAAFLQAPALARFLEHNLTSDNCALLCDAAAAFGLRDVFHSAALFICDGERELAAELALPEARAYVAALRPSSYAAVSTHTPAPGFLEDASRTLCYLDEEEDAWRTLAALPLEASTLLAGVATLGNKLYIVGGVRGASKEVVELGFCYDPDGGTWHEFPSPHQPRYDTALAGFDGRLYAIGGEFQRTPISSVERYDPAAGCWSFVADLPQPAAGVPCAQACGRLFVCLWRPADTTAVVEYAVRTDAWLPVAELRRPQSYGHCMVAHRDSLYVVRNGPSDDFLHCAIDCLNLATGQWTALPGQFVNSKGALFTAVVRGDTVYTVNRMFTLLYAIEGGTWRLLREKAGFPRPGSLQTFLLRLPPGAPGPVTSTTAEL.

Positions 7–74 (TLVQVWVGGQ…LRGDRPALAA (68 aa)) constitute a BTB domain. Kelch repeat units follow at residues 159–209 (AVST…TLGN), 210–258 (KLYI…GFDG), 259–305 (RLYA…QACG), 307–350 (LFVC…VAHR), and 352–400 (SLYV…VVRG).

As to quaternary structure, component of the BCR(KBTBD13) E3 ubiquitin ligase complex, at least composed of CUL3 and KBTBD13 and RBX1. Interacts with CUL3. Post-translationally, autoubiquitinated. As to expression, expressed in skeletal muscle.

The protein resides in the cytoplasm. The protein operates within protein modification; protein ubiquitination. Substrate-specific adapter of a BCR (BTB-CUL3-RBX1) E3 ubiquitin ligase complex. The sequence is that of Kelch repeat and BTB domain-containing protein 13 (KBTBD13) from Homo sapiens (Human).